Here is a 151-residue protein sequence, read N- to C-terminus: MRVPLDEIDKKIIKILQNDGKAPLREISKITGLAESTIHERIRKLRESGVIKKFTAIIDPEALGYSMLAFILVKVKAGKYSEVASNLAKYPEIVEVYETTGDYDMVVKIRTKNSEELNNFLDLIGSIPGVEGTHTMIVLKTHKETTELPIK.

The HTH asnC-type domain occupies 5-66 (LDEIDKKIIK…IIDPEALGYS (62 aa)). The H-T-H motif DNA-binding region spans 24–43 (LREISKITGLAESTIHERIR). Residue 98–104 (ETTGDYD) coordinates L-arginine. Residues N118, D122, and 133 to 135 (THT) contribute to the L-lysine site. Residues D122 and 133–135 (THT) contribute to the L-arginine site.

In terms of assembly, homodimer. Binds DNA as a dimer and an octamer. The octamer formed with lysine is stable in solution, but the octamer formed with arginine is unstable without DNA. When crystallized in the absence of DNA, dimers are assembled into helical cylinders with six dimers per turn. In solution, predominantly behaves as a dimer.

In the famine mode, FL11 forms dimers and acts as a repressor, leading to growth arrest. In the feast mode, in the presence of high concentrations of lysine or arginine, four dimers assemble into an octamer and cover the fl11 and lysine biosynthesis promoters. This leads to the inhibition of fl11 expression and lysine biosynthesis, decrease of the FL11 concentration in the cell, derepression of the target genes and activation of the metabolism. In terms of biological role, DNA-binding protein involved in the repression of transcription of a large number of genes, thereby arresting growth, in response to environmental changes. Binding sites are identified in promoters of approximately 200 transcription units, including genes involved in ATP synthesis, transmembrane transport, translation and DNA synthesis. This Pyrococcus horikoshii (strain ATCC 700860 / DSM 12428 / JCM 9974 / NBRC 100139 / OT-3) protein is HTH-type transcriptional regulator FL11.